The chain runs to 625 residues: Keratin, type II cytoskeletal 1 (625 aa).

Low complexity predominate over residues 1-12 (MSFQCSSRSLCR). The disordered stretch occupies residues 1–27 (MSFQCSSRSLCRSGGGGGGRNFSSGSA). The head stretch occupies residues 1 to 178 (MSFQCSSRSL…DPQIQKVKSQ (178 aa)). Arg-12 carries the post-translational modification Omega-N-methylarginine. A phosphoserine mark is found at Ser-23 and Ser-26. Arg-51 is subject to Omega-N-methylarginine. The residue at position 69 (Ser-69) is a Phosphoserine. Positions 171–319 (QIQKVKSQER…DIDFFSTLYQ (149 aa)) form a coiled coil. The interval 179-214 (EREQIKSLNDKFASFIDKVRFLEQQNQVLQTKWELL) is coil 1A. The 314-residue stretch at 179–492 (EREQIKSLND…KLLEGEEIRM (314 aa)) folds into the IF rod domain. The segment at 215–233 (QQVDTSTRTQNLDPFFESY) is linker 1. Residues 234 to 325 (ISNLRRQVDS…TLYQMELSQM (92 aa)) form a coil 1B region. Residue Lys-275 is modified to N6,N6-dimethyllysine. The tract at residues 326 to 349 (QTQISETNVVLSMDNNRTLDLDGI) is linker 12. Residues 350-488 (IAEVKAQYDS…ATYRKLLEGE (139 aa)) are coil 2. Residues 388–475 (DSVKNTKMEI…ELMNTKLALD (88 aa)) are a coiled coil. A tail region spans residues 489–625 (EIRMSGECTP…VSTTYSRGTN (137 aa)). 2 disordered regions span residues 496–525 (CTPNVSVSVSTSHTSMSGTSSRGGGRYGSG) and 560–625 (SGGG…RGTN). Positions 500–515 (VSVSVSTSHTSMSGTS) are enriched in low complexity. Gly residues-rich tracts occupy residues 516 to 525 (SRGGGRYGSG) and 560 to 606 (SGGG…GGVK). Arg-517, Arg-574, and Arg-596 each carry omega-N-methylarginine. A compositionally biased stretch (polar residues) spans 613 to 625 (VKFVSTTYSRGTN).

The protein belongs to the intermediate filament family. Heterotetramer of two type I and two type II keratins. Heterodimer with KRT10. Two heterodimers of KRT1 and KRT10 form a heterotetramer. Forms a heterodimer with KRT14; the interaction is more abundant in the absence of KRT5. Interacts with ITGB1 in the presence of RACK1 and SRC, and with RACK1. Interacts with C1QBP; the association represents a cell surface kininogen receptor. Interacts with EPPK1; interaction is dependent of higher-order structure of intermediate filament. Post-translationally, undergoes deimination of some arginine residues (citrullination).

It localises to the cell membrane. Its subcellular location is the cytoplasm. Its function is as follows. May regulate the activity of kinases such as PKC and SRC via binding to integrin beta-1 (ITB1) and the receptor of activated protein C kinase 1 (RACK1). In complex with C1QBP is a high affinity receptor for kininogen-1/HMWK. The sequence is that of Keratin, type II cytoskeletal 1 from Rattus norvegicus (Rat).